A 449-amino-acid polypeptide reads, in one-letter code: Naphthalene 1,2-dioxygenase system, large oxygenase component (449 aa).

The Rieske domain occupies 39–137; it reads WLFLTHDSLI…LDKKCMGLKE (99 aa). [2Fe-2S] cluster contacts are provided by C81, H83, C101, and H104. H208, H213, and D362 together coordinate Fe cation.

The protein belongs to the bacterial ring-hydroxylating dioxygenase alpha subunit family. In terms of assembly, the naphthalene dioxygenase (NDO) multicomponent enzyme system is composed of an electron transfer component and a dioxygenase component (iron sulfur protein (ISP)). The electron transfer component is composed of a ferredoxin reductase (NdoR) and a ferredoxin (NdoA), and the dioxygenase component is formed of a heterohexamer (trimer of heterodimers) of three large alpha subunits (NdoB) and three small beta subunits (NdoC). The cofactor is [2Fe-2S] cluster. Fe(2+) is required as a cofactor.

The catalysed reaction is naphthalene + NADH + O2 + H(+) = (1R,2S)-1,2-dihydronaphthalene-1,2-diol + NAD(+). The protein operates within aromatic compound metabolism; naphthalene degradation. Functionally, component of the naphthalene dioxygenase (NDO) multicomponent enzyme system which catalyzes the incorporation of both atoms of molecular oxygen into naphthalene to form cis-(1R,2S)-dihydroxy-1,2-dihydronaphthalene. The alpha subunit has a catalytic role in the holoenzyme. The polypeptide is Naphthalene 1,2-dioxygenase system, large oxygenase component (Pseudomonas aeruginosa).